The primary structure comprises 199 residues: Early activation antigen CD69 (199 aa).

Polar residues predominate over residues 1 to 14 (MDSENCSITENSSS). Positions 1–20 (MDSENCSITENSSSHLERGQ) are disordered. Residues 1-40 (MDSENCSITENSSSHLERGQKDHGTSIHFEKHHEGSIQVS) are Cytoplasmic-facing. A helical; Signal-anchor for type II membrane protein transmembrane segment spans residues 41–61 (IPWAVLIVVLITSLIIALIAL). At 62-199 (NVGKYNCPGL…FHWVCSKPSR (138 aa)) the chain is on the extracellular side. Cystine bridges form between cysteine 85/cysteine 96, cysteine 113/cysteine 194, and cysteine 173/cysteine 186. In terms of domain architecture, C-type lectin spans 92-195 (YKRTCYFFST…CEANFHWVCS (104 aa)). N-linked (GlcNAc...) asparagine glycans are attached at residues asparagine 150, asparagine 166, and asparagine 180.

Homodimer; disulfide-linked. Interacts with S100A8 and S100A9. Interacts with galactin-1/LGALS1. Interacts with S1PR1; this interaction mediates S1PR1 degradation. Interacts with JAK3 and STAT5. Post-translationally, constitutive Ser/Thr phosphorylation in both mature thymocytes and activated T-lymphocytes. As to expression, expressed on the surface of activated T-cells, B-cells, natural killer cells, neutrophils and platelets. Present also in eosinophils.

It is found in the cell membrane. Functionally, transmembrane protein expressed mainly on T-cells resident in mucosa that plays an essential role in immune cell homeostasis. Rapidly expressed on the surface of platelets, T-lymphocytes and NK cells upon activation by various stimuli, such as antigen recognition or cytokine signaling, stimulates different signaling pathways in different cell types. Negatively regulates Th17 cell differentiation through its carbohydrate dependent interaction with galectin-1/LGALS1 present on immature dendritic cells. Association of CD69 cytoplasmic tail with the JAK3/STAT5 signaling pathway regulates the transcription of RORgamma/RORC and, consequently, differentiation toward the Th17 lineage. Also acts via the S100A8/S100A9 complex present on peripheral blood mononuclear cells to promote the conversion of naive CD4 T-cells into regulatory T-cells. Acts as an oxidized low-density lipoprotein (oxLDL) receptor in CD4 T-lymphocytes and negatively regulates the inflammatory response by inducing the expression of PDCD1 through the activation of NFAT. Participates in adipose tissue-derived mesenchymal stem cells (ASCs)-mediated protection against P.aeruginosa infection. Mechanistically, specifically recognizes P.aeruginosa to promote ERK1 activation, followed by granulocyte-macrophage colony-stimulating factor (GM-CSF) and other inflammatory cytokines secretion. In eosinophils, induces IL-10 production through the ERK1/2 pathway. Negatively regulates the chemotactic responses of effector lymphocytes and dendritic cells (DCs) to sphingosine 1 phosphate/S1P by acting as a S1PR1 receptor agonist and facilitating the internalization and degradation of the receptor. The polypeptide is Early activation antigen CD69 (Cd69) (Mus musculus (Mouse)).